The sequence spans 336 residues: Dihydroorotate dehydrogenase (quinone) (336 aa).

FMN contacts are provided by residues 62-66 (AGLDK) and threonine 86. Residue lysine 66 coordinates substrate. 111-115 (NRMGF) contacts substrate. 2 residues coordinate FMN: asparagine 139 and asparagine 172. Asparagine 172 is a binding site for substrate. The active-site Nucleophile is the serine 175. Asparagine 177 is a binding site for substrate. FMN contacts are provided by lysine 217 and threonine 245. Residue 246 to 247 (NT) coordinates substrate. FMN contacts are provided by residues glycine 268, glycine 297, and 318-319 (YT).

Belongs to the dihydroorotate dehydrogenase family. Type 2 subfamily. In terms of assembly, monomer. FMN serves as cofactor.

It localises to the cell membrane. The catalysed reaction is (S)-dihydroorotate + a quinone = orotate + a quinol. The protein operates within pyrimidine metabolism; UMP biosynthesis via de novo pathway; orotate from (S)-dihydroorotate (quinone route): step 1/1. In terms of biological role, catalyzes the conversion of dihydroorotate to orotate with quinone as electron acceptor. The sequence is that of Dihydroorotate dehydrogenase (quinone) from Vibrio parahaemolyticus serotype O3:K6 (strain RIMD 2210633).